Reading from the N-terminus, the 525-residue chain is Serine/threonine protein phosphatase 2A 55 kDa regulatory subunit B beta isoform (525 aa).

The tract at residues 1-30 (MDPSSKSPDDDDLRPEAEAARRPQPQPQPR) is disordered. 2 WD repeats span residues 48 to 87 (QEVDIISAIEFDKSGDHLATGDRGGRVVLFERTDSRDSAS) and 124 to 165 (EIEE…VKRI). The segment at 169 to 191 (NLNTSQSSGNGTTSSSSSSSSRA) is disordered. Positions 171 to 189 (NTSQSSGNGTTSSSSSSSS) are enriched in low complexity. WD repeat units follow at residues 244-282 (AHDYHINSISNNSDGETYISADDLRINLWNLEISNQSFN), 293-333 (DLTE…LCDN), 352-390 (EIIASVSDIKFARDGRHILSRDYMTLKLWDINMDSGPVA), and 495-525 (DLSTKLLHLAWHPTENSIACAAANSLYMYYA).

Belongs to the phosphatase 2A regulatory subunit B family. PP2A consists of a common heteromeric enzyme, composed of a catalytic subunit (subunits C), a constant regulatory subunit (subunit A), and a variety of regulatory subunits such as subunits B (the R2/B/PR55/B55, R3/B''/PR72/PR130/PR59 and R5/B'/B56 families).

Its function is as follows. The B regulatory subunit may modulate substrate selectivity and catalytic activity, and may also direct the localization of the catalytic enzyme to a particular subcellular compartment. The protein is Serine/threonine protein phosphatase 2A 55 kDa regulatory subunit B beta isoform of Oryza sativa subsp. japonica (Rice).